A 29-amino-acid polypeptide reads, in one-letter code: Galanin (29 aa).

An Alanine amide modification is found at alanine 29.

Belongs to the galanin family.

It is found in the secreted. Contracts smooth muscle of the gastrointestinal and genitourinary tract, regulates growth hormone release, modulates insulin release, and may be involved in the control of adrenal secretion. This chain is Galanin (gal), found in Amia calva (Bowfin).